Consider the following 181-residue polypeptide: Alkyl hydroperoxide reductase AhpD (181 aa).

The active-site Proton donor is the C131. A disulfide bridge connects residues C131 and C134. Residue C134 is the Cysteine sulfenic acid (-SOH) intermediate of the active site.

This sequence belongs to the AhpD family.

The catalysed reaction is N(6)-[(R)-dihydrolipoyl]-L-lysyl-[lipoyl-carrier protein] + a hydroperoxide = N(6)-[(R)-lipoyl]-L-lysyl-[lipoyl-carrier protein] + an alcohol + H2O. In terms of biological role, antioxidant protein with alkyl hydroperoxidase activity. Required for the reduction of the AhpC active site cysteine residues and for the regeneration of the AhpC enzyme activity. In Azorhizobium caulinodans (strain ATCC 43989 / DSM 5975 / JCM 20966 / LMG 6465 / NBRC 14845 / NCIMB 13405 / ORS 571), this protein is Alkyl hydroperoxide reductase AhpD.